A 255-amino-acid chain; its full sequence is MASNDSIKKTLGVVVGLSLVCSIIVSTAAVGLRDQQKANAVLDKQSKIIEVAGIDSKGKKVPELFAQYIEPRLVDFATGDFVDGNAATYDQRKAAKDPAQSIKLTAEQDDAKILRRANTGVVYLVKNGDSISKIILPVHGNGLWSMMYAFVAVETDGNTVSGITYYEQGETPGLGGEVENPSWRAQFVGKKLFDENHKPAIKVVKGGAPVGSEHGVDGLSGATLTSNGVQHTFDFWLGDMGFGPFLAKVRDGGLN.

Residues 11-31 (LGVVVGLSLVCSIIVSTAAVG) traverse the membrane as a helical segment. An FMN phosphoryl threonine modification is found at T223.

It belongs to the NqrC family. In terms of assembly, composed of six subunits; NqrA, NqrB, NqrC, NqrD, NqrE and NqrF. The cofactor is FMN.

It localises to the cell inner membrane. The enzyme catalyses a ubiquinone + n Na(+)(in) + NADH + H(+) = a ubiquinol + n Na(+)(out) + NAD(+). NQR complex catalyzes the reduction of ubiquinone-1 to ubiquinol by two successive reactions, coupled with the transport of Na(+) ions from the cytoplasm to the periplasm. NqrA to NqrE are probably involved in the second step, the conversion of ubisemiquinone to ubiquinol. This Vibrio vulnificus (strain CMCP6) protein is Na(+)-translocating NADH-quinone reductase subunit C.